The following is a 283-amino-acid chain: Probable endonuclease 4 (283 aa).

Zn(2+) contacts are provided by His67, His107, Glu144, Asp178, His181, His215, Asp228, His230, and Glu260.

Belongs to the AP endonuclease 2 family. The cofactor is Zn(2+).

The enzyme catalyses Endonucleolytic cleavage to 5'-phosphooligonucleotide end-products.. Endonuclease IV plays a role in DNA repair. It cleaves phosphodiester bonds at apurinic or apyrimidinic (AP) sites, generating a 3'-hydroxyl group and a 5'-terminal sugar phosphate. This chain is Probable endonuclease 4, found in Geobacter sp. (strain M21).